Consider the following 151-residue polypeptide: uncharacterized protein (151 aa).

One can recognise a Nudix hydrolase domain in the interval 6 to 143; it reads MKTLSAGIIF…QWQYVMGPSL (138 aa).

This is an uncharacterized protein from Escherichia coli (Bacteriophage T4).